The sequence spans 962 residues: Phosphatidylinositol 3,4,5-trisphosphate 3-phosphatase and dual-specificity protein phosphatase daf-18 (962 aa).

A disordered region spans residues 1–37 (MVTPPPDVPSTSTRSMARDLQENPNRQPGEPRVSEPY). Residues 58–230 (CRTEYQNIDL…YYYHKLRERE (173 aa)) form the Phosphatase tensin-type domain. C169 (phosphocysteine intermediate) is an active-site residue. In terms of domain architecture, C2 tensin-type spans 234-530 (LPLRMQLIGV…GMKLHVVLRC (297 aa)). Disordered stretches follow at residues 382–416 (DTSI…WQIV) and 689–731 (IENT…RLPD). Over residues 392-403 (RRNETPMRKIDP) the composition is skewed to basic and acidic residues. Low complexity predominate over residues 692–704 (TGPSTSGSSAPGT). Positions 706-720 (KKTEASQSDKVKPAT) are enriched in basic and acidic residues.

This sequence belongs to the PTEN phosphatase protein family. In terms of assembly, interacts (via C-terminus) with vab-1 (via kinase domain); the interaction is independent of vab-1 kinase activity. Interacts with arr-1 and mpz-1; the interaction may inhibit daf-18. Interacts (via C-terminus) with daf-2 (via kinase domain). Post-translationally, phosphorylated by vab-1 on tyrosine residues which may promote daf-18 degradation. As to expression, expressed in embryo, larvae and in adult germline (at protein level). Expressed at equal levels in the 6 vulva precursor cells (VPCs) of L2 larvae and in the descendant cells of the induced VPCs (at protein level). Expressed in the uterus (at protein level). Expressed in the Z2/Z3 germline precursors, oocytes, several amphid neurons and weakly in the nerve cord (at protein level).

It is found in the perikaryon. The protein resides in the cell membrane. The protein localises to the cell projection. It localises to the axon. Its subcellular location is the dendrite. It is found in the cytoplasm. The protein resides in the nucleus. The enzyme catalyses a 1,2-diacyl-sn-glycero-3-phospho-(1D-myo-inositol-3,4,5-trisphosphate) + H2O = a 1,2-diacyl-sn-glycero-3-phospho-(1D-myo-inositol-4,5-bisphosphate) + phosphate. It carries out the reaction O-phospho-L-seryl-[protein] + H2O = L-seryl-[protein] + phosphate. The catalysed reaction is O-phospho-L-threonyl-[protein] + H2O = L-threonyl-[protein] + phosphate. It catalyses the reaction O-phospho-L-tyrosyl-[protein] + H2O = L-tyrosyl-[protein] + phosphate. The enzyme catalyses 1,2-dioctanoyl-sn-glycero-3-phospho-(1D-myo-inositol-3,4,5-trisphosphate) + H2O = 1,2-dioctanoyl-sn-glycero-3-phospho-(1D-myo-inositol-4,5-bisphosphate) + phosphate. It carries out the reaction 1,2-dihexadecanoyl-sn-glycero-3-phospho-(1D-myo-inositol-3,4,5-trisphosphate) + H2O = 1,2-dihexadecanoyl-sn-glycero-3-phospho-(1D-myo-inositol-4,5-bisphosphate) + phosphate. Functionally, acts as a dual-specificity protein phosphatase, dephosphorylating tyrosine-, serine- and threonine-phosphorylated proteins. Also acts as a lipid phosphatase, removing the phosphate in the D3 position of the inositol ring from phosphatidylinositol 3,4,5-trisphosphate. By dephosphorylating PtdIns(3,4,5)P3 antagonizes PtdIns(3,4,5)P3 production by age-1/PI3K and thus, negatively regulates daf-2-mediated processes including dauer formation, longevity, fat metabolism, chemotaxis towards salt, thermotolerance and axon guidance. Similarly, promotes apoptosis during embryonic development by suppressing the recruitment of the prosurvival kinases akt-1/2 to the plasma membrane. In addition, regulates Z2/Z3 germline precursor cell cycle by maintaining them arrested at the G2 stage and by controlling their growth during L1 diapause. After sperm depletion in larvae and adult hermaphrodites, promotes germline stem cell quiescence and oocyte accumulation. By dephosphorylating ephrin-like receptor vab-1 on tyrosine residues, negatively regulates oocyte maturation downstream of vab-1 and upstream of mpk-1, independently of daf-2. Plays a role in postembryonic muscle arm extensions. Required for neurite outgrowth during AIY interneuron embryonic development. Mainly independently of daf-2, negatively regulates vulva induction probably by inhibiting mpk-1 phosphorylation. Both lipid and protein phosphatase activities are required for the regulation of vulva induction. Plays a role in gonad and germline development following the L1 diapause. This chain is Phosphatidylinositol 3,4,5-trisphosphate 3-phosphatase and dual-specificity protein phosphatase daf-18, found in Caenorhabditis elegans.